A 182-amino-acid polypeptide reads, in one-letter code: Ribosome-recycling factor (182 aa).

Belongs to the RRF family.

Its subcellular location is the cytoplasm. Functionally, responsible for the release of ribosomes from messenger RNA at the termination of protein biosynthesis. May increase the efficiency of translation by recycling ribosomes from one round of translation to another. In Mycoplasma capricolum subsp. capricolum (strain California kid / ATCC 27343 / NCTC 10154), this protein is Ribosome-recycling factor.